The primary structure comprises 77 residues: Protein RALF-like 17 (77 aa).

Positions 1 to 29 (MAASREFIICCFLTLLLCNFFMRVESGAA) are cleaved as a signal peptide. A disulfide bridge links Cys37 with Cys51.

This sequence belongs to the plant rapid alkalinization factor (RALF) family.

Its subcellular location is the secreted. Cell signaling peptide that may regulate plant stress, growth, and development. Mediates a rapid alkalinization of extracellular space by mediating a transient increase in the cytoplasmic Ca(2+) concentration leading to a calcium-dependent signaling events through a cell surface receptor and a concomitant activation of some intracellular mitogen-activated protein kinases. The sequence is that of Protein RALF-like 17 (RALFL17) from Arabidopsis thaliana (Mouse-ear cress).